Reading from the N-terminus, the 222-residue chain is tRNA (guanine-N(1)-)-methyltransferase (222 aa).

S-adenosyl-L-methionine is bound by residues Gly-110 and 130–135 (IGDYVL).

The protein belongs to the RNA methyltransferase TrmD family. As to quaternary structure, homodimer.

It localises to the cytoplasm. The catalysed reaction is guanosine(37) in tRNA + S-adenosyl-L-methionine = N(1)-methylguanosine(37) in tRNA + S-adenosyl-L-homocysteine + H(+). Its function is as follows. Specifically methylates guanosine-37 in various tRNAs. The chain is tRNA (guanine-N(1)-)-methyltransferase from Protochlamydia amoebophila (strain UWE25).